Consider the following 360-residue polypeptide: Iron uptake protein A1 (360 aa).

The N-terminal stretch at 1-28 (MVQKLSRRLFLSIGTAFTVVVGSQLLSS) is a signal peptide. Cysteine 29 carries N-palmitoyl cysteine lipidation. The S-diacylglycerol cysteine moiety is linked to residue cysteine 29. Residues histidine 54, tyrosine 55, tyrosine 185, tyrosine 241, and tyrosine 242 each coordinate Fe cation.

The protein belongs to the bacterial solute-binding protein 1 family.

Its subcellular location is the cellular thylakoid membrane. The protein localises to the cell membrane. Its function is as follows. Plays an important role in protecting the acceptor side of photosystem II (PSII) against oxidative damage, especially under iron-limiting growth conditions. The differing subcellular locations of futA1 (predominantly thylakoid lumen) and futA2 (predominantly periplasmic) suggest they may fulfill different roles. A major iron-binding protein involved in Fe(3+) uptake, probably part of a periplasmic ABC transporter complex futA1A2BC (TC 3.A.1.10.2) involved in Fe(3+) ion import (ferric iron). This protein and futA2 (slr0531) may be subunit proteins that have redundant or overlapping substrate-binding functions. This is Iron uptake protein A1 (futA1) from Synechocystis sp. (strain ATCC 27184 / PCC 6803 / Kazusa).